A 641-amino-acid chain; its full sequence is Toxin TseL (641 aa).

Interacts with VgrG3; this interaction allows TseL secretion to target cells.

It is found in the secreted. Functionally, toxin secreted by the type VI (T6SS) secretion system that acts on prokaryotic as well as eukaryotic target cells. The sequence is that of Toxin TseL from Vibrio cholerae serotype O1 (strain ATCC 39315 / El Tor Inaba N16961).